Here is a 361-residue protein sequence, read N- to C-terminus: Small ribosomal subunit protein mS46 (361 aa).

Residues 1–14 (MRSSMFRCVSRAHY) constitute a mitochondrion transit peptide. Residues 37–99 (ASSNALKLDK…SDSVRANKQQ (63 aa)) are disordered. The span at 43-52 (KLDKMKEGRM) shows a compositional bias: basic and acidic residues. Residues 59–68 (GNQNRNSMNN) show a composition bias toward low complexity. Residues 69–91 (KESRGREGNQGERNMRLKNRSSD) show a composition bias toward basic and acidic residues.

The protein belongs to the mitochondrion-specific ribosomal protein mS46 family. As to quaternary structure, component of the mitochondrial small ribosomal subunit (mt-SSU). Mature yeast 74S mitochondrial ribosomes consist of a small (37S) and a large (54S) subunit. The 37S small subunit contains a 15S ribosomal RNA (15S mt-rRNA) and 34 different proteins. The 54S large subunit contains a 21S rRNA (21S mt-rRNA) and 46 different proteins.

It localises to the mitochondrion. In terms of biological role, component of the mitochondrial ribosome (mitoribosome), a dedicated translation machinery responsible for the synthesis of mitochondrial genome-encoded proteins, including at least some of the essential transmembrane subunits of the mitochondrial respiratory chain. The mitoribosomes are attached to the mitochondrial inner membrane and translation products are cotranslationally integrated into the membrane. This Saccharomyces cerevisiae (strain ATCC 204508 / S288c) (Baker's yeast) protein is Small ribosomal subunit protein mS46 (RSM28).